We begin with the raw amino-acid sequence, 284 residues long: MSADVHTGRLRFTKMHGAGNDFVVLDLRNGTPPPDASLAARLADRHFGVGCDQILTIETPRSAEAVAAYRIWNSDGSHSQQCGNGARCVAAWLVREGTAQGDVFTIDSPFTAHRVERLDAGTYSVAMGVPQFEPTQIPLAGFAHARDEYALPVHGETVRFGAVSMGNPHAVVEVGRVDAAPVERVGALLQQNAAFPESVNVGFAQVVDPAHVRLRVYERGVGETLACGSGACAAAVVLMHRGRVERDVRVSLPGGELRIRWAGEQAQVVMSGPAVFVFDGEWNQ.

The substrate site is built by asparagine 20, glutamine 53, and asparagine 73. Cysteine 82 serves as the catalytic Proton donor. Residues 83–84 (GN), asparagine 167, asparagine 200, and 218–219 (ER) each bind substrate. The Proton acceptor role is filled by cysteine 227. 228–229 (GS) is a binding site for substrate.

It belongs to the diaminopimelate epimerase family. In terms of assembly, homodimer.

Its subcellular location is the cytoplasm. The catalysed reaction is (2S,6S)-2,6-diaminopimelate = meso-2,6-diaminopimelate. It participates in amino-acid biosynthesis; L-lysine biosynthesis via DAP pathway; DL-2,6-diaminopimelate from LL-2,6-diaminopimelate: step 1/1. Functionally, catalyzes the stereoinversion of LL-2,6-diaminopimelate (L,L-DAP) to meso-diaminopimelate (meso-DAP), a precursor of L-lysine and an essential component of the bacterial peptidoglycan. The protein is Diaminopimelate epimerase of Xanthomonas campestris pv. campestris (strain ATCC 33913 / DSM 3586 / NCPPB 528 / LMG 568 / P 25).